The chain runs to 299 residues: Probable 3-hydroxyisobutyrate dehydrogenase-like 2, mitochondrial (299 aa).

NAD(+) is bound by residues 14 to 43 (TRIGWIGIGIMGSAMVSHILAAGYSVTVYA) and Ser-108. Residue Lys-182 is part of the active site. Position 250 (Lys-250) interacts with NAD(+).

The protein belongs to the HIBADH-related family. 3-hydroxyisobutyrate dehydrogenase subfamily.

The protein localises to the mitochondrion. The enzyme catalyses 3-hydroxy-2-methylpropanoate + NAD(+) = 2-methyl-3-oxopropanoate + NADH + H(+). It participates in amino-acid degradation; L-valine degradation. The polypeptide is Probable 3-hydroxyisobutyrate dehydrogenase-like 2, mitochondrial (Arabidopsis thaliana (Mouse-ear cress)).